The primary structure comprises 630 residues: tRNA uridine 5-carboxymethylaminomethyl modification enzyme MnmG (630 aa).

13–18 (GGGHAG) provides a ligand contact to FAD. 273–287 (GPRYCPSIEDKIHRF) is a binding site for NAD(+).

This sequence belongs to the MnmG family. As to quaternary structure, homodimer. Heterotetramer of two MnmE and two MnmG subunits. Requires FAD as cofactor.

It is found in the cytoplasm. NAD-binding protein involved in the addition of a carboxymethylaminomethyl (cmnm) group at the wobble position (U34) of certain tRNAs, forming tRNA-cmnm(5)s(2)U34. The protein is tRNA uridine 5-carboxymethylaminomethyl modification enzyme MnmG of Pseudomonas aeruginosa (strain LESB58).